A 341-amino-acid polypeptide reads, in one-letter code: MKALSKLKAEEGIWMTDVPEPEVGHNDLLIKIRKTAICGTDVHIYNWDEWSQKTIPVPMVVGHEYVGEVVGIGQEVRGFKIGDRVSGEGHITCGHCRNCRAGRTHLCRNTIGVGVNRPGCFAEYLVIPAFNAFKIPDNISDDLASIFDPFGNAVHTALSFDLVGEDVLVSGAGPIGVMAAAVAKHVGARNVVITDVNEYRLELARKMGVTRAVNVAKENLNDVMAELGMTEGFDVGLEMSGAPPAFRSMLDTMNHGGRIAMLGIPPSDMSIDWTKVIFKGLFIKGIYGREMFETWYKMAALIQSGLDLSPIITHRFGIDDFQKGFDAMRSGQSGKVVLSWE.

Residue C38 participates in Zn(2+) binding. Catalysis depends on charge relay system residues T40 and H43. Zn(2+) is bound by residues H63, E64, C93, C96, C99, and C107. Residues I175, D195, R200, 262 to 264, and 286 to 287 contribute to the NAD(+) site; these read LGI and IY.

This sequence belongs to the zinc-containing alcohol dehydrogenase family. Homotetramer. Zn(2+) serves as cofactor.

It localises to the cytoplasm. It catalyses the reaction L-threonine + NAD(+) = (2S)-2-amino-3-oxobutanoate + NADH + H(+). Its pathway is amino-acid degradation; L-threonine degradation via oxydo-reductase pathway; glycine from L-threonine: step 1/2. Catalyzes the NAD(+)-dependent oxidation of L-threonine to 2-amino-3-ketobutyrate. This Klebsiella pneumoniae (strain 342) protein is L-threonine 3-dehydrogenase.